Consider the following 153-residue polypeptide: Ribosome maturation factor RimP (153 aa).

The protein belongs to the RimP family.

It is found in the cytoplasm. Functionally, required for maturation of 30S ribosomal subunits. The protein is Ribosome maturation factor RimP of Picosynechococcus sp. (strain ATCC 27264 / PCC 7002 / PR-6) (Agmenellum quadruplicatum).